The sequence spans 332 residues: Serpentine receptor class gamma-3 (332 aa).

The next 7 helical transmembrane spans lie at 23–43 (FAYL…IWVS), 72–92 (LIFT…SEIV), 101–121 (IYYC…IFIA), 144–164 (IMLI…LISD), 184–204 (WASL…ITMV), 231–251 (AALI…FAFF), and 263–283 (YLRF…LLLV).

The protein belongs to the nematode receptor-like protein srg family.

It localises to the membrane. This Caenorhabditis elegans protein is Serpentine receptor class gamma-3 (srg-3).